The following is a 341-amino-acid chain: tRNA N6-adenosine threonylcarbamoyltransferase (341 aa).

Fe cation is bound by residues H115 and H119. Substrate-binding positions include 137–141, D170, G183, D187, and N276; that span reads IVSGG. D304 is a Fe cation binding site.

This sequence belongs to the KAE1 / TsaD family. It depends on Fe(2+) as a cofactor.

The protein resides in the cytoplasm. It carries out the reaction L-threonylcarbamoyladenylate + adenosine(37) in tRNA = N(6)-L-threonylcarbamoyladenosine(37) in tRNA + AMP + H(+). Functionally, required for the formation of a threonylcarbamoyl group on adenosine at position 37 (t(6)A37) in tRNAs that read codons beginning with adenine. Is involved in the transfer of the threonylcarbamoyl moiety of threonylcarbamoyl-AMP (TC-AMP) to the N6 group of A37, together with TsaE and TsaB. TsaD likely plays a direct catalytic role in this reaction. The polypeptide is tRNA N6-adenosine threonylcarbamoyltransferase (Staphylococcus aureus (strain USA300)).